We begin with the raw amino-acid sequence, 344 residues long: Biotin synthase (344 aa).

One can recognise a Radical SAM core domain in the interval 40–267 (AQVQVSTLLS…KSMVRLSAGR (228 aa)). [4Fe-4S] cluster-binding residues include cysteine 55, cysteine 59, and cysteine 62. Positions 99, 130, 190, and 262 each coordinate [2Fe-2S] cluster.

This sequence belongs to the radical SAM superfamily. Biotin synthase family. In terms of assembly, homodimer. [4Fe-4S] cluster serves as cofactor. Requires [2Fe-2S] cluster as cofactor.

It carries out the reaction (4R,5S)-dethiobiotin + (sulfur carrier)-SH + 2 reduced [2Fe-2S]-[ferredoxin] + 2 S-adenosyl-L-methionine = (sulfur carrier)-H + biotin + 2 5'-deoxyadenosine + 2 L-methionine + 2 oxidized [2Fe-2S]-[ferredoxin]. It participates in cofactor biosynthesis; biotin biosynthesis; biotin from 7,8-diaminononanoate: step 2/2. Functionally, catalyzes the conversion of dethiobiotin (DTB) to biotin by the insertion of a sulfur atom into dethiobiotin via a radical-based mechanism. This is Biotin synthase from Xanthomonas axonopodis pv. citri (strain 306).